The primary structure comprises 353 residues: Probable arabinan endo-1,5-alpha-L-arabinosidase B (353 aa).

Residues 1–16 (MVLVATLFSLFTVSLC) form the signal peptide. The active-site Proton acceptor is Asp-39. The N-linked (GlcNAc...) asparagine glycan is linked to Asn-194. Positions 202–227 (HLAKHPKTERVNSQDQNPDPLCRDSS) are disordered. Glu-233 serves as the catalytic Proton donor.

Belongs to the glycosyl hydrolase 43 family.

Its subcellular location is the secreted. It carries out the reaction Endohydrolysis of (1-&gt;5)-alpha-arabinofuranosidic linkages in (1-&gt;5)-arabinans.. It functions in the pathway glycan metabolism; L-arabinan degradation. In terms of biological role, endo-1,5-alpha-L-arabinanase involved in degradation of pectin. Its preferred substrate is linear 1,5-alpha-L-arabinan. In Aspergillus oryzae (strain ATCC 42149 / RIB 40) (Yellow koji mold), this protein is Probable arabinan endo-1,5-alpha-L-arabinosidase B (abnB).